The following is a 67-amino-acid chain: Protein AaeX (67 aa).

The next 2 helical transmembrane spans lie at 3-23 (LFPV…KLLL) and 43-63 (FVWH…YLIS).

This sequence belongs to the AaeX family.

It localises to the cell membrane. This Salmonella gallinarum (strain 287/91 / NCTC 13346) protein is Protein AaeX.